The chain runs to 257 residues: MLPSDLVNYKKKSRKIIALTAWDSISGSIAEQANVDLVLVGDSLAMVCLGYQSTLPITLENIIYHTNAVSRGFKKKIEEQPLVVSDMPFMTYQCGEDKAVEYAGKIIQSTYAKAVKVEGAEPEIQKVISRLIRMGIPVMGHIGLTPQSYLNIGLRKQGESLASQEKIKKEASILEELGCFSIVLEHIPDLLAKEIQNSLTIPTIGIGAGNYCDGQVRVTADLLGLNDDQPPFCQPIIQGKKLFKDKLKEWVDSERLS.

Positions 42 and 86 each coordinate Mg(2+). 3-methyl-2-oxobutanoate-binding positions include 42-43 (DS), Asp-86, and Lys-116. Glu-118 lines the Mg(2+) pocket. The Proton acceptor role is filled by Glu-185.

The protein belongs to the PanB family. In terms of assembly, homodecamer; pentamer of dimers. It depends on Mg(2+) as a cofactor.

It is found in the cytoplasm. The catalysed reaction is 3-methyl-2-oxobutanoate + (6R)-5,10-methylene-5,6,7,8-tetrahydrofolate + H2O = 2-dehydropantoate + (6S)-5,6,7,8-tetrahydrofolate. It participates in cofactor biosynthesis; (R)-pantothenate biosynthesis; (R)-pantoate from 3-methyl-2-oxobutanoate: step 1/2. Its function is as follows. Catalyzes the reversible reaction in which hydroxymethyl group from 5,10-methylenetetrahydrofolate is transferred onto alpha-ketoisovalerate to form ketopantoate. The chain is 3-methyl-2-oxobutanoate hydroxymethyltransferase from Prochlorococcus marinus (strain MIT 9301).